Consider the following 208-residue polypeptide: Ribosomal RNA small subunit methyltransferase J (208 aa).

S-adenosyl-L-methionine is bound by residues 54-55 (RD), 70-71 (ER), and Asp-122.

It belongs to the methyltransferase superfamily. RsmJ family.

The protein localises to the cytoplasm. The catalysed reaction is guanosine(1516) in 16S rRNA + S-adenosyl-L-methionine = N(2)-methylguanosine(1516) in 16S rRNA + S-adenosyl-L-homocysteine + H(+). Its function is as follows. Specifically methylates the guanosine in position 1516 of 16S rRNA. The sequence is that of Ribosomal RNA small subunit methyltransferase J from Agrobacterium fabrum (strain C58 / ATCC 33970) (Agrobacterium tumefaciens (strain C58)).